Here is a 186-residue protein sequence, read N- to C-terminus: uncharacterized protein (186 aa).

Residues 1-28 form the signal peptide; it reads MSVKPAALFRISAALAVAGLGASLIASA.

This is an uncharacterized protein from Rhizobium meliloti (strain 1021) (Ensifer meliloti).